The chain runs to 294 residues: 4-hydroxy-tetrahydrodipicolinate synthase (294 aa).

Pyruvate is bound at residue T45. The active-site Proton donor/acceptor is Y133. K162 functions as the Schiff-base intermediate with substrate in the catalytic mechanism. I204 lines the pyruvate pocket.

The protein belongs to the DapA family. As to quaternary structure, homotetramer; dimer of dimers.

The protein resides in the cytoplasm. It carries out the reaction L-aspartate 4-semialdehyde + pyruvate = (2S,4S)-4-hydroxy-2,3,4,5-tetrahydrodipicolinate + H2O + H(+). It functions in the pathway amino-acid biosynthesis; L-lysine biosynthesis via DAP pathway; (S)-tetrahydrodipicolinate from L-aspartate: step 3/4. Is allosterically regulated by the feedback inhibitor (S)-lysine. In terms of biological role, catalyzes the condensation of (S)-aspartate-beta-semialdehyde [(S)-ASA] and pyruvate to 4-hydroxy-tetrahydrodipicolinate (HTPA). The chain is 4-hydroxy-tetrahydrodipicolinate synthase from Agrobacterium fabrum (strain C58 / ATCC 33970) (Agrobacterium tumefaciens (strain C58)).